Consider the following 471-residue polypeptide: Ribulose bisphosphate carboxylase large chain (471 aa).

Substrate contacts are provided by N115 and T165. K167 acts as the Proton acceptor in catalysis. Residue K169 participates in substrate binding. Residues K193, D195, and E196 each coordinate Mg(2+). At K193 the chain carries N6-carboxylysine. H286 acts as the Proton acceptor in catalysis. Positions 287, 319, and 371 each coordinate substrate.

It belongs to the RuBisCO large chain family. Type I subfamily. Heterohexadecamer of 8 large chains and 8 small chains. Mg(2+) serves as cofactor.

The protein localises to the carboxysome. It carries out the reaction 2 (2R)-3-phosphoglycerate + 2 H(+) = D-ribulose 1,5-bisphosphate + CO2 + H2O. It catalyses the reaction D-ribulose 1,5-bisphosphate + O2 = 2-phosphoglycolate + (2R)-3-phosphoglycerate + 2 H(+). Functionally, ruBisCO catalyzes two reactions: the carboxylation of D-ribulose 1,5-bisphosphate, the primary event in carbon dioxide fixation, as well as the oxidative fragmentation of the pentose substrate in the photorespiration process. Both reactions occur simultaneously and in competition at the same active site. The polypeptide is Ribulose bisphosphate carboxylase large chain (Prochlorococcus marinus (strain MIT 9301)).